Here is a 207-residue protein sequence, read N- to C-terminus: Pyrrolidone-carboxylate peptidase (207 aa).

Active-site residues include glutamate 80, cysteine 143, and histidine 167.

Belongs to the peptidase C15 family. Homotetramer.

The protein resides in the cytoplasm. It catalyses the reaction Release of an N-terminal pyroglutamyl group from a polypeptide, the second amino acid generally not being Pro.. Its function is as follows. Removes 5-oxoproline from various penultimate amino acid residues except L-proline. The chain is Pyrrolidone-carboxylate peptidase from Coprothermobacter proteolyticus (strain ATCC 35245 / DSM 5265 / OCM 4 / BT).